A 160-amino-acid chain; its full sequence is Large ribosomal subunit protein bL19 (160 aa).

2 stretches are compositionally biased toward basic and acidic residues: residues methionine 1–serine 15 and alanine 28–serine 39. Residues methionine 1–serine 44 are disordered.

It belongs to the bacterial ribosomal protein bL19 family.

In terms of biological role, this protein is located at the 30S-50S ribosomal subunit interface and may play a role in the structure and function of the aminoacyl-tRNA binding site. The sequence is that of Large ribosomal subunit protein bL19 from Prochlorococcus marinus (strain SARG / CCMP1375 / SS120).